Here is a 989-residue protein sequence, read N- to C-terminus: Cellulose synthase A catalytic subunit 4 [UDP-forming] (989 aa).

Topologically, residues 1-184 (MMESGVPPCA…SRIIPISKNK (184 aa)) are cytoplasmic. Residues cysteine 9, cysteine 12, cysteine 20, cysteine 23, cysteine 28, cysteine 31, cysteine 43, and cysteine 46 each coordinate Zn(2+). An RING-type; degenerate zinc finger spans residues 9–47 (CAACGDDAHAACRACSYALCKACLDEDAAEGRTTCARCG). Residues 138-149 (KKEKKASAKKAA) show a composition bias toward basic residues. Residues 138–158 (KKEKKASAKKAAAKAQAPPVE) form a disordered region. A helical transmembrane segment spans residues 185–205 (LTPYRAVIIMRLVVLGLFFHY). At 206–213 (RITNPVYS) the chain is on the extracellular side. Residues 214–234 (AFGLWMTSVICEIWFGFSWIL) form a helical membrane-spanning segment. The Cytoplasmic portion of the chain corresponds to 235-772 (DQFPKWCPIN…INTIVYPFTS (538 aa)). UDP-alpha-D-glucose-binding residues include serine 272, lysine 278, glutamate 279, and aspartate 308. Residue aspartate 308 is part of the active site. The stretch at 362–389 (VKERRAMKRDYEEYKVRINALVAKAQKT) forms a coiled coil. Lysine 449 is a UDP-alpha-D-glucose binding site. Mn(2+) is bound by residues lysine 450 and aspartate 474. Aspartate 688 is a catalytic residue. A helical transmembrane segment spans residues 773–793 (LPLIAYCCLPAICLLTGKFII). The Extracellular segment spans residues 794–798 (PTLSN). Residues 799-819 (AATIWFLGLFISIIVTSVLEL) traverse the membrane as a helical segment. Residues 820-835 (RWSGIGIEDWWRNEQF) are Cytoplasmic-facing. A helical membrane pass occupies residues 836–856 (WVIGGVSAHLFAVFQGILKMI). Over 857 to 884 (AGLDTNFTVTAKATDDTEFGELYVFKWT) the chain is Extracellular. Residue asparagine 862 is glycosylated (N-linked (GlcNAc...) asparagine). A helical membrane pass occupies residues 885–905 (TVLIPPTSILVLNLVGVVAGF). Residues 906–916 (SDALNSGYESW) are Cytoplasmic-facing. The chain crosses the membrane as a helical span at residues 917-937 (GPLFGKVFFAMWVIMHLYPFL). Over 938 to 946 (KGLMGRQNR) the chain is Extracellular. The chain crosses the membrane as a helical span at residues 947 to 967 (TPTIVVLWSVLLASVFSLLWV). Residues 968 to 989 (KIDPFIGSSETTTTNSCANFDC) are Cytoplasmic-facing.

This sequence belongs to the glycosyltransferase 2 family. Plant cellulose synthase subfamily. Mn(2+) serves as cofactor. The cofactor is Zn(2+).

It is found in the cell membrane. It catalyses the reaction [(1-&gt;4)-beta-D-glucosyl](n) + UDP-alpha-D-glucose = [(1-&gt;4)-beta-D-glucosyl](n+1) + UDP + H(+). It functions in the pathway glycan metabolism; plant cellulose biosynthesis. Catalytic subunit of cellulose synthase terminal complexes ('rosettes'), required for beta-1,4-glucan microfibril crystallization, a major mechanism of the cell wall formation. Involved in the secondary cell wall formation. The chain is Cellulose synthase A catalytic subunit 4 [UDP-forming] (CESA4) from Oryza sativa subsp. japonica (Rice).